The sequence spans 380 residues: 3-isopropylmalate dehydratase large subunit (380 aa).

Residues Cys262, Cys320, and Cys323 each coordinate [4Fe-4S] cluster.

This sequence belongs to the aconitase/IPM isomerase family. LeuC type 2 subfamily. As to quaternary structure, heterodimer of LeuC and LeuD. [4Fe-4S] cluster serves as cofactor.

It carries out the reaction (2R,3S)-3-isopropylmalate = (2S)-2-isopropylmalate. It participates in amino-acid biosynthesis; L-leucine biosynthesis; L-leucine from 3-methyl-2-oxobutanoate: step 2/4. Catalyzes the isomerization between 2-isopropylmalate and 3-isopropylmalate, via the formation of 2-isopropylmaleate. In Pyrococcus horikoshii (strain ATCC 700860 / DSM 12428 / JCM 9974 / NBRC 100139 / OT-3), this protein is 3-isopropylmalate dehydratase large subunit.